Here is a 366-residue protein sequence, read N- to C-terminus: Phosphoserine aminotransferase (366 aa).

L-glutamate is bound at residue Arg-42. Pyridoxal 5'-phosphate is bound by residues 76–77 (AT), Trp-101, Thr-156, Asp-178, and Gln-201. Lys-202 carries the post-translational modification N6-(pyridoxal phosphate)lysine. 243 to 244 (NT) serves as a coordination point for pyridoxal 5'-phosphate.

It belongs to the class-V pyridoxal-phosphate-dependent aminotransferase family. SerC subfamily. As to quaternary structure, homodimer. Requires pyridoxal 5'-phosphate as cofactor.

The protein resides in the cytoplasm. The enzyme catalyses O-phospho-L-serine + 2-oxoglutarate = 3-phosphooxypyruvate + L-glutamate. The catalysed reaction is 4-(phosphooxy)-L-threonine + 2-oxoglutarate = (R)-3-hydroxy-2-oxo-4-phosphooxybutanoate + L-glutamate. The protein operates within amino-acid biosynthesis; L-serine biosynthesis; L-serine from 3-phospho-D-glycerate: step 2/3. Its pathway is cofactor biosynthesis; pyridoxine 5'-phosphate biosynthesis; pyridoxine 5'-phosphate from D-erythrose 4-phosphate: step 3/5. Functionally, catalyzes the reversible conversion of 3-phosphohydroxypyruvate to phosphoserine and of 3-hydroxy-2-oxo-4-phosphonooxybutanoate to phosphohydroxythreonine. This chain is Phosphoserine aminotransferase, found in Aromatoleum aromaticum (strain DSM 19018 / LMG 30748 / EbN1) (Azoarcus sp. (strain EbN1)).